The primary structure comprises 2144 residues: Polyketide synthase-like protein Preu9 (2144 aa).

A Ketosynthase family 3 (KS3) domain is found at 1-250 (MYALHLAVNA…GANAHCIIDH (250 aa)). The interval 276–325 (QNGHLNEFAANGTTNAPSRDHRNGITDGRADGNTNGHPNANGDVGGNPIN) is disordered. Basic and acidic residues predominate over residues 293–305 (SRDHRNGITDGRA). The segment at 435 to 738 (FVFTGQGAQW…KSPVEQILKS (304 aa)) is malonyl-CoA:ACP transacylase (MAT). The interval 827–965 (HDLLGSKVVG…GCVKLIIKSS (139 aa)) is N-terminal hotdog fold. Positions 827–1137 (HDLLGSKVVG…ERLRCVSYSR (311 aa)) are dehydratase (DH) domain. Residues 827–1141 (HDLLGSKVVG…CVSYSRISSD (315 aa)) enclose the PKS/mFAS DH domain. Residue H859 is the Proton acceptor; for dehydratase activity of the active site. Positions 979 to 1141 (TLRPVDVRAW…CVSYSRISSD (163 aa)) are C-terminal hotdog fold. The active-site Proton donor; for dehydratase activity is D1050. Residues 1305 to 1494 (TGIYPQLHRI…GLDVVLDDFP (190 aa)) are methyltransferase (MT) domain. Positions 1731 to 2042 (GVPNSLCFAS…LANMIGKLVV (312 aa)) are enoyl reductase (ER) domain.

In terms of biological role, polyketide synthase-like protein that lacks important domains such as carrier domain and does probably not function as a polyketide synthase. This chain is Polyketide synthase-like protein Preu9, found in Preussia isomera (Coprophilous fungus).